The sequence spans 102 residues: RNA-binding protein Hfq (102 aa).

The Sm domain occupies 9–68 (DPFLNALRRERVPVSIYLVNGIKLQGQIESFDQFVILLKNTVSQMVYKHAISTVVPSRPV). The disordered stretch occupies residues 63-102 (VPSRPVSHHSNNAGGGTSSNYHHGSSAQGTSAQQDSEETE). Over residues 70-96 (HHSNNAGGGTSSNYHHGSSAQGTSAQQ) the composition is skewed to polar residues.

The protein belongs to the Hfq family. As to quaternary structure, homohexamer.

In terms of biological role, RNA chaperone that binds small regulatory RNA (sRNAs) and mRNAs to facilitate mRNA translational regulation in response to envelope stress, environmental stress and changes in metabolite concentrations. Also binds with high specificity to tRNAs. This is RNA-binding protein Hfq from Citrobacter koseri (strain ATCC BAA-895 / CDC 4225-83 / SGSC4696).